We begin with the raw amino-acid sequence, 361 residues long: 3-dehydroquinate synthase (361 aa).

Residues 72-77 (SGEKEK), 130-131 (TT), Lys-142, and Lys-151 each bind NAD(+). Residues Glu-184, His-247, and His-264 each coordinate Zn(2+).

The protein belongs to the sugar phosphate cyclases superfamily. Dehydroquinate synthase family. Co(2+) is required as a cofactor. It depends on Zn(2+) as a cofactor. The cofactor is NAD(+).

The protein localises to the cytoplasm. It carries out the reaction 7-phospho-2-dehydro-3-deoxy-D-arabino-heptonate = 3-dehydroquinate + phosphate. The protein operates within metabolic intermediate biosynthesis; chorismate biosynthesis; chorismate from D-erythrose 4-phosphate and phosphoenolpyruvate: step 2/7. In terms of biological role, catalyzes the conversion of 3-deoxy-D-arabino-heptulosonate 7-phosphate (DAHP) to dehydroquinate (DHQ). In Bacillus cereus (strain ZK / E33L), this protein is 3-dehydroquinate synthase.